The primary structure comprises 101 residues: NAD(P)H-quinone oxidoreductase subunit 4L, chloroplastic (101 aa).

3 helical membrane-spanning segments follow: residues Met-2–Ile-22, Met-32–Phe-52, and Ile-61–Val-81.

Belongs to the complex I subunit 4L family. As to quaternary structure, NDH is composed of at least 16 different subunits, 5 of which are encoded in the nucleus.

Its subcellular location is the plastid. It is found in the chloroplast thylakoid membrane. The enzyme catalyses a plastoquinone + NADH + (n+1) H(+)(in) = a plastoquinol + NAD(+) + n H(+)(out). The catalysed reaction is a plastoquinone + NADPH + (n+1) H(+)(in) = a plastoquinol + NADP(+) + n H(+)(out). NDH shuttles electrons from NAD(P)H:plastoquinone, via FMN and iron-sulfur (Fe-S) centers, to quinones in the photosynthetic chain and possibly in a chloroplast respiratory chain. The immediate electron acceptor for the enzyme in this species is believed to be plastoquinone. Couples the redox reaction to proton translocation, and thus conserves the redox energy in a proton gradient. The chain is NAD(P)H-quinone oxidoreductase subunit 4L, chloroplastic from Populus trichocarpa (Western balsam poplar).